The sequence spans 340 residues: Ferredoxin--NADP reductase (340 aa).

7 residues coordinate FAD: Asp-33, Gln-41, Tyr-46, Ala-86, Phe-120, Asp-286, and Thr-327.

This sequence belongs to the ferredoxin--NADP reductase type 2 family. Homodimer. The cofactor is FAD.

The enzyme catalyses 2 reduced [2Fe-2S]-[ferredoxin] + NADP(+) + H(+) = 2 oxidized [2Fe-2S]-[ferredoxin] + NADPH. This chain is Ferredoxin--NADP reductase, found in Rickettsia rickettsii (strain Sheila Smith).